The following is a 1192-amino-acid chain: Protein WWC2 (1192 aa).

2 WW domains span residues 10–43 and 57–90; these read LPLPRGWEEARDYDGKVFYIDHNTRRTSWIDPRD and DELPWGWEAGFDPQIGVYYIDHINKTTQIEDPRK. Coiled-coil stretches lie at residues 121 to 194 and 224 to 256; these read KEQR…YKEQ and ELKSIRKAISSGEKEKQDLMQSLAKLQERFHLD. A Phosphoserine modification is found at Ser-286. Positions 302-421 form a coiled coil; it reads LAEKVRLSLQ…KLEETTKLTT (120 aa). A disordered region spans residues 441-462; it reads SSLGSLASSRGSLNTSSRGSLN. Positions 698–821 constitute a C2 domain; the sequence is ETAQVQIGLR…FSSEVFTLWY (124 aa). The stretch at 859–887 forms a coiled coil; that stretch reads ALLARTSAELLAVEQELAQEEEEESGQEE. Disordered regions lie at residues 873-895 and 911-991; these read QELAQEEEEESGQEEPRGPDGDW and EAEV…SRQH. A compositionally biased stretch (acidic residues) spans 875–885; that stretch reads LAQEEEEESGQ. The segment covering 923 to 933 has biased composition (polar residues); it reads TEDLSSCTSVP. The span at 938–951 shows a compositional bias: basic and acidic residues; it reads DGNRKESNCAKDLR. Thr-1004 is subject to Phosphothreonine. Residue Ser-1022 is modified to Phosphoserine. Residues 1031-1050 are interaction with PRKCZ; it reads SLFVRNSTERRSLRVKRTVC. The stretch at 1068–1144 forms a coiled coil; the sequence is DLELDLQASL…EQKQGLNAEK (77 aa). Basic and acidic residues predominate over residues 1124-1137; it reads QAEKQAEQSKEEQK. Positions 1124–1143 are disordered; sequence QAEKQAEQSKEEQKQGLNAE.

Belongs to the WWC family. In terms of assembly, forms homodimers and heterodimers with WWC1 and WWC3. Interacts with DLC1 and PRKCZ. Interacts (via WW domains) with LATS1 and LATS2.

The protein localises to the cytoplasm. It localises to the cytosol. Regulator of the Hippo signaling pathway, also known as the Salvador-Warts-Hippo (SWH) pathway. Enhances phosphorylation of LATS1 and YAP1 and negatively regulates cell proliferation and organ growth due to a suppression of the transcriptional activity of YAP1, the major effector of the Hippo pathway. This is Protein WWC2 from Homo sapiens (Human).